Reading from the N-terminus, the 246-residue chain is Flagellar brake protein YcgR (246 aa).

The region spanning Lys-128–Ile-232 is the PilZ domain.

Belongs to the YcgR family. Monomer. Interacts with the flagellar basal bodies.

It is found in the bacterial flagellum basal body. Acts as a flagellar brake, regulating swimming and swarming in a bis-(3'-5') cyclic diguanylic acid (c-di-GMP)-dependent manner. Binds 1 c-di-GMP dimer per subunit. Increasing levels of c-di-GMP lead to decreased motility. In Thioalkalivibrio sulfidiphilus (strain HL-EbGR7), this protein is Flagellar brake protein YcgR.